The chain runs to 458 residues: UPF0210 protein MmarC6_1246 (458 aa).

It belongs to the UPF0210 family.

This Methanococcus maripaludis (strain C6 / ATCC BAA-1332) protein is UPF0210 protein MmarC6_1246.